The sequence spans 576 residues: A-type ATP synthase subunit A (576 aa).

ATP is bound at residue 228–235 (GGFGTGKT).

It belongs to the ATPase alpha/beta chains family. As to quaternary structure, has multiple subunits with at least A(3), B(3), C, D, E, F, H, I and proteolipid K(x).

Its subcellular location is the cell membrane. The catalysed reaction is ATP + H2O + 4 H(+)(in) = ADP + phosphate + 5 H(+)(out). Functionally, component of the A-type ATP synthase that produces ATP from ADP in the presence of a proton gradient across the membrane. The A chain is the catalytic subunit. The sequence is that of A-type ATP synthase subunit A from Methanothrix thermoacetophila (strain DSM 6194 / JCM 14653 / NBRC 101360 / PT) (Methanosaeta thermophila).